The sequence spans 210 residues: Na(+)-translocating NADH-quinone reductase subunit D (210 aa).

The next 6 membrane-spanning stretches (helical) occupy residues 11–31 (ILAP…VCSA), 42–62 (FVMT…VSLI), 72–92 (IIVQ…VLKA), 103–123 (VFVG…AFAM), 131–151 (FIDG…VGFF), and 178–198 (NGLM…IWAI).

It belongs to the NqrDE/RnfAE family. As to quaternary structure, composed of six subunits; NqrA, NqrB, NqrC, NqrD, NqrE and NqrF.

It is found in the cell inner membrane. The catalysed reaction is a ubiquinone + n Na(+)(in) + NADH + H(+) = a ubiquinol + n Na(+)(out) + NAD(+). Its function is as follows. NQR complex catalyzes the reduction of ubiquinone-1 to ubiquinol by two successive reactions, coupled with the transport of Na(+) ions from the cytoplasm to the periplasm. NqrA to NqrE are probably involved in the second step, the conversion of ubisemiquinone to ubiquinol. The protein is Na(+)-translocating NADH-quinone reductase subunit D of Vibrio atlanticus (strain LGP32) (Vibrio splendidus (strain Mel32)).